The sequence spans 404 residues: Cysteine desulfurase IscS (404 aa).

Pyridoxal 5'-phosphate contacts are provided by residues 75–76 (AT), Asn-155, Gln-183, and 203–205 (SGH). The residue at position 206 (Lys-206) is an N6-(pyridoxal phosphate)lysine. Thr-243 contributes to the pyridoxal 5'-phosphate binding site. The active-site Cysteine persulfide intermediate is the Cys-328. [2Fe-2S] cluster is bound at residue Cys-328.

This sequence belongs to the class-V pyridoxal-phosphate-dependent aminotransferase family. NifS/IscS subfamily. In terms of assembly, homodimer. Forms a heterotetramer with IscU, interacts with other sulfur acceptors. Pyridoxal 5'-phosphate is required as a cofactor.

The protein resides in the cytoplasm. It carries out the reaction (sulfur carrier)-H + L-cysteine = (sulfur carrier)-SH + L-alanine. Its pathway is cofactor biosynthesis; iron-sulfur cluster biosynthesis. Functionally, master enzyme that delivers sulfur to a number of partners involved in Fe-S cluster assembly, tRNA modification or cofactor biosynthesis. Catalyzes the removal of elemental sulfur atoms from cysteine to produce alanine. Functions as a sulfur delivery protein for Fe-S cluster synthesis onto IscU, an Fe-S scaffold assembly protein, as well as other S acceptor proteins. The chain is Cysteine desulfurase IscS from Shewanella sp. (strain ANA-3).